Consider the following 266-residue polypeptide: Undecaprenyl-diphosphatase (266 aa).

Helical transmembrane passes span 1 to 21 (MDTF…FLPI), 39 to 59 (QGLS…VMYF), 87 to 107 (WWII…KDFI), 111 to 131 (FRSI…LWWA), 144 to 164 (VGWK…IPGT), 183 to 203 (AAAR…AILV), 218 to 238 (ALGL…HYFL), and 246 to 266 (MTPF…IIFL).

The protein belongs to the UppP family.

The protein resides in the cell inner membrane. The catalysed reaction is di-trans,octa-cis-undecaprenyl diphosphate + H2O = di-trans,octa-cis-undecaprenyl phosphate + phosphate + H(+). In terms of biological role, catalyzes the dephosphorylation of undecaprenyl diphosphate (UPP). Confers resistance to bacitracin. The chain is Undecaprenyl-diphosphatase from Shewanella pealeana (strain ATCC 700345 / ANG-SQ1).